A 180-amino-acid polypeptide reads, in one-letter code: D-glycero-beta-D-manno-heptose-1,7-bisphosphate 7-phosphatase (180 aa).

D14 functions as the Nucleophile in the catalytic mechanism. Mg(2+) contacts are provided by D14 and D16. Substrate is bound by residues D14–D16, N22–Y25, and T56–S59. The active-site Proton donor is D16. 4 residues coordinate Zn(2+): C95, H97, C110, and H112. R113 to K114 is a binding site for substrate. Residue D139 participates in Mg(2+) binding.

It belongs to the gmhB family. Monomer. It depends on Mg(2+) as a cofactor.

The protein resides in the cytoplasm. The enzyme catalyses D-glycero-beta-D-manno-heptose 1,7-bisphosphate + H2O = D-glycero-beta-D-manno-heptose 1-phosphate + phosphate. Its pathway is nucleotide-sugar biosynthesis; ADP-L-glycero-beta-D-manno-heptose biosynthesis; ADP-L-glycero-beta-D-manno-heptose from D-glycero-beta-D-manno-heptose 7-phosphate: step 2/4. It participates in bacterial outer membrane biogenesis; LPS core biosynthesis. In terms of biological role, converts the D-glycero-beta-D-manno-heptose 1,7-bisphosphate (beta-HBP) intermediate into D-glycero-beta-D-manno-heptose 1-phosphate by removing the phosphate group at the C-7 position. Also catalyzes the dephosphorylation of D-glycero-alpha-D-manno-heptose 1,7-bisphosphate in vitro. In Rhodopseudomonas palustris (strain ATCC BAA-98 / CGA009), this protein is D-glycero-beta-D-manno-heptose-1,7-bisphosphate 7-phosphatase.